The primary structure comprises 194 residues: Rho-related protein racC (194 aa).

GTP contacts are provided by A17, G19, K20, T21, C22, E34, Y36, T39, G64, K120, D122, A163, and K164. T21 contacts Mg(2+). 2 short sequence motifs (switch) span residues R30–F41 and D61–A79. A Mg(2+)-binding site is contributed by T39. Cysteine methyl ester is present on C191. C191 is lipidated: S-geranylgeranyl cysteine. Positions A192–L194 are cleaved as a propeptide — removed in mature form.

Belongs to the small GTPase superfamily. Rho family. In terms of assembly, interacts (GTP-bound form) with PAK4 (via CRIB domain). Interacts (GTP-bound form) with PAK5 (via CRIB domain). Mg(2+) is required as a cofactor.

It localises to the cell membrane. Its subcellular location is the cytoplasm. The protein resides in the cytoskeleton. The catalysed reaction is GTP + H2O = GDP + phosphate + H(+). With respect to regulation, regulated by guanine nucleotide exchange factors (GEFs) which promote the exchange of bound GDP for free GTP, GTPase activating proteins (GAPs) which increase the GTP hydrolysis activity, and GDP dissociation inhibitors which inhibit the dissociation of the nucleotide from the GTPase. In terms of biological role, small GTPase which cycles between active GTP-bound and inactive GDP-bound states. The protein is Rho-related protein racC of Entamoeba histolytica (strain ATCC 30459 / HM-1:IMSS / ABRM).